The chain runs to 676 residues: Probable metal-nicotianamine transporter YSL6 (676 aa).

Transmembrane regions (helical) follow at residues 38-58 (ITIR…IITH), 62-82 (LTVG…FFFV), 110-130 (CVVA…LIAM), 154-174 (GLWW…FSLV), 276-296 (IVNC…WPFV), 321-341 (VFIA…KIIA), 392-412 (FAIA…PIIF), 413-433 (PPLK…LAFC), 452-472 (IGLF…AGLA), 510-530 (VGTA…WTAF), 561-581 (LPKH…IVNL), 604-624 (FYIG…LFVW), and 639-659 (VASG…ILSI).

This sequence belongs to the YSL (TC 2.A.67.2) family.

It localises to the membrane. Its function is as follows. May be involved in the transport of nicotianamine-chelated metals. The chain is Probable metal-nicotianamine transporter YSL6 (YSL6) from Arabidopsis thaliana (Mouse-ear cress).